The chain runs to 303 residues: Pycsar effector protein XpPycTIR (303 aa).

14 to 138 is a binding site for a nucleoside 3',5'-cyclic phosphate; it reads LVATLTEHRL…RRIAATLARR (125 aa). Residues 154 to 273 form a TIR-like region; sequence RVFIMSSVEA…DLAGLTTIPY (120 aa).

It is found in the cytoplasm. The catalysed reaction is NAD(+) + H2O = ADP-D-ribose + nicotinamide + H(+). Pycsar (pyrimidine cyclase system for antiphage resistance) provides immunity against bacteriophage. The pyrimidine cyclase (PycC) synthesizes cyclic nucleotides in response to infection; these serve as specific second messenger signals. The signals activate the adjacent effector, leading to bacterial cell death and abortive phage infection. A clade B Pycsar system. Functionally, the effector gene of a two-gene Pycsar system. Expression of this and adjacent uridylate cyclase XpPycC (AC P0DV28) confers resistance to bacteriophage T7. When cells expressing the Pycsar system are infected by phage T7 at low multiplicity of infection (0.2 MOI) the culture survivey, at 2.0 MOI bacteria enter growth arrest. The same cells enter growth arrest after exposure to 2.5 mM cUMP but not cCMP; the effector protein responds only to the cUMP usually produced by its cognate NTP cyclase. NAD(+) levels in infected cells are depleted between 5 and 10 minutes after infection with T7 at MOI of 2. Probably only responds to cUMP. This chain is Pycsar effector protein XpPycTIR, found in Xanthomonas perforans.